A 96-amino-acid chain; its full sequence is Uteroglobin (96 aa).

Residues 1 to 19 (MKIAITITVLMLSICCSSA) form the signal peptide.

The protein belongs to the secretoglobin family. As to quaternary structure, antiparallel homodimer; disulfide-linked. Interaction with LMBR1L is controversial. Club cells (nonciliated cells of the surface epithelium of the pulmonary airways).

The protein localises to the secreted. Binds phosphatidylcholine, phosphatidylinositol, polychlorinated biphenyls (PCB) and weakly progesterone, potent inhibitor of phospholipase A2. The protein is Uteroglobin (Scgb1a1) of Rattus norvegicus (Rat).